The sequence spans 158 residues: Fluoride-specific ion channel FluC 2 (158 aa).

Transmembrane regions (helical) follow at residues 25 to 45, 63 to 83, 95 to 115, and 126 to 146; these read AWHG…IGGT, WTTF…MVVI, PFFG…AVDI, and TALA…RLAA. 2 residues coordinate Na(+): Gly103 and Thr106.

This sequence belongs to the fluoride channel Fluc/FEX (TC 1.A.43) family.

It is found in the cell membrane. The catalysed reaction is fluoride(in) = fluoride(out). Na(+) is not transported, but it plays an essential structural role and its presence is essential for fluoride channel function. In terms of biological role, fluoride-specific ion channel. Important for reducing fluoride concentration in the cell, thus reducing its toxicity. The sequence is that of Fluoride-specific ion channel FluC 2 from Streptomyces avermitilis (strain ATCC 31267 / DSM 46492 / JCM 5070 / NBRC 14893 / NCIMB 12804 / NRRL 8165 / MA-4680).